A 240-amino-acid chain; its full sequence is Large ribosomal subunit protein uL2 (240 aa).

The span at 1-11 (MGKRLISQNRG) shows a compositional bias: polar residues. Disordered stretches follow at residues 1-28 (MGKR…KGAV) and 206-240 (GGGR…TGRK). 2 stretches are compositionally biased toward basic residues: residues 13–28 (GTPK…KGAV) and 224–240 (SPGR…TGRK).

The protein belongs to the universal ribosomal protein uL2 family. In terms of assembly, part of the 50S ribosomal subunit. Forms a bridge to the 30S subunit in the 70S ribosome.

Functionally, one of the primary rRNA binding proteins. Required for association of the 30S and 50S subunits to form the 70S ribosome, for tRNA binding and peptide bond formation. It has been suggested to have peptidyltransferase activity; this is somewhat controversial. Makes several contacts with the 16S rRNA in the 70S ribosome. In Methanococcus maripaludis (strain C5 / ATCC BAA-1333), this protein is Large ribosomal subunit protein uL2.